The sequence spans 246 residues: MQWIDEGLVIGLRKHGETGVVLELMTLEHGRHLGLVHGGRSRRMQPMLQPGNTLRATWRARLDGALGSYAVEPLTLNASRLMDSGLALYGIGHLSTLLRLLPERDPHPALYEAAQVLIAHLDEPEIAPALMVRFELALLAGLGFGLDLSHCAATGANDALVYVSPKSGRAVSASAGEPFRDRLLALPPFLRDRDQPGSGWRTPDAHDVREGFTLTGYFLDQHVWRPRAQDTPEERARFVALGTGQR.

This sequence belongs to the RecO family.

Involved in DNA repair and RecF pathway recombination. This Methylorubrum populi (strain ATCC BAA-705 / NCIMB 13946 / BJ001) (Methylobacterium populi) protein is DNA repair protein RecO.